The following is a 199-amino-acid chain: MARCKS-related protein (199 aa).

A disordered region spans residues 1-199; that stretch reads MGSQSSKAPR…PTPAGAEQNE (199 aa). The N-myristoyl glycine moiety is linked to residue G2. A Phosphothreonine modification is found at T14. Over residues 16-26 the composition is skewed to low complexity; the sequence is EEAAGASPAKA. Residues S22, S36, and S48 each carry the phosphoserine modification. The segment covering 53–64 has biased composition (low complexity); it reads GTDEAAGATGDA. The residue at position 71 (S71) is a Phosphoserine. Residues 76–85 show a composition bias toward basic and acidic residues; sequence AKGDAPPKET. At T85 the chain carries Phosphothreonine. Positions 86–98 are enriched in basic residues; sequence PKKKKKFSFKKPF. The interval 87–110 is effector domain involved in lipid-binding and calmodulin-binding; that stretch reads KKKKKFSFKKPFKLSGLSFKRNRK. S93, S101, and S104 each carry phosphoserine; by PKC. S119 carries the post-translational modification Phosphoserine. S120 bears the Phosphoserine; by MAPK8 mark. Phosphoserine is present on S135. A Phosphothreonine; by MAPK8 modification is found at T148. Residue S151 is modified to Phosphoserine. The segment covering 156-167 has biased composition (low complexity); it reads AKGAEAGAACKG. T170 is subject to Phosphothreonine. Over residues 181 to 199 the composition is skewed to low complexity; it reads STPSGPESGPTPAGAEQNE. Phosphothreonine; by MAPK8 is present on T182. T191 is modified (phosphothreonine).

Belongs to the MARCKS family. Binds to filamentous actin (F-actin), but not to monomeric G-actin, independently of its phosphorylation status. Interacts with calmodulin. In terms of processing, phosphorylated. Phosphorylation at Ser-120 and Thr-182 is non-redundantly catalyzed by MAPK8 in vivo. Phosphorylation at Thr-148 is preferentially catalyzed by MAPK8 in vivo, but this modification can also be catalyzed by other kinases in the absence of MAPK8. May be phosphorylated by protein kinase C, which disrupts the interaction with calmodulin.

It localises to the cytoplasm. The protein localises to the cytoskeleton. Its subcellular location is the cell membrane. Its function is as follows. Controls cell movement by regulating actin cytoskeleton homeostasis and filopodium and lamellipodium formation. When unphosphorylated, induces cell migration. When phosphorylated by MAPK8, induces actin bundles formation and stabilization, thereby reducing actin plasticity, hence restricting cell movement, including neuronal migration. May be involved in coupling the protein kinase C and calmodulin signal transduction systems. In Oryctolagus cuniculus (Rabbit), this protein is MARCKS-related protein (MARCKSL1).